The primary structure comprises 126 residues: Fatty acid-binding protein 2, liver (126 aa).

Cholate is bound by residues 54–56 (TPN), 99–101 (HIQ), and Arg121.

The protein belongs to the calycin superfamily. Fatty-acid binding protein (FABP) family.

It localises to the cytoplasm. Its function is as follows. Binds free fatty acids and their coenzyme A derivatives, bilirubin, and some other small molecules in the cytoplasm. May be involved in intracellular lipid transport. The specificity of axolotl L-FABP differs from that of LB-FABP. Binds 2 ligands per protein molecule. This chain is Fatty acid-binding protein 2, liver, found in Ambystoma mexicanum (Axolotl).